A 547-amino-acid polypeptide reads, in one-letter code: Chaperonin GroEL (547 aa).

ATP is bound by residues 29 to 32 (TLGP), K50, 86 to 90 (DGTTT), G414, 478 to 480 (NAA), and D494.

This sequence belongs to the chaperonin (HSP60) family. As to quaternary structure, forms a cylinder of 14 subunits composed of two heptameric rings stacked back-to-back. Interacts with the co-chaperonin GroES.

The protein localises to the cytoplasm. The catalysed reaction is ATP + H2O + a folded polypeptide = ADP + phosphate + an unfolded polypeptide.. Its function is as follows. Together with its co-chaperonin GroES, plays an essential role in assisting protein folding. The GroEL-GroES system forms a nano-cage that allows encapsulation of the non-native substrate proteins and provides a physical environment optimized to promote and accelerate protein folding. This chain is Chaperonin GroEL, found in Saccharophagus degradans (strain 2-40 / ATCC 43961 / DSM 17024).